The sequence spans 81 residues: uncharacterized protein (81 aa).

The N-terminal stretch at 1 to 20 is a signal peptide; it reads MIDDHEALLLLVLSSGPAAL.

This is an uncharacterized protein from Treponema pallidum (strain Nichols).